The chain runs to 238 residues: MNVNEFSNEFDVLYNNIMSNAAPGLNEYEKSVLLTKAQEEIVKNYFEPAGNKYGKGLDDSPKRQIDFSELIKVGEGVLNTSAPTITFDKRAKVYDLPADLFLVINEAVDTNAGTKQIVPISYSDYTRLMSRPYKEPVKYQAWRIITTSINNISVELIVNSNETITDYKVRYIRRPAPIITTNLSSEYGDVTINGVSTVSECELNPIIHSEILQRAVELAKAAYQGDLQASVELGQRSE.

Homododecamer.

Its subcellular location is the virion. Forms the tail multi-ring barrel with ring protein 1, ring protein 2 and ring protein 3. In Bacteroides phage crAss001 (Bacteroides phage PhiCrAss001), this protein is Ring protein 4/5.